Reading from the N-terminus, the 195-residue chain is Transcriptional regulator LdrP (195 aa).

The HTH crp-type domain occupies 110-182 (GELRARIARY…YRRVYLLDLA (73 aa)). A DNA-binding region (H-T-H motif) is located at residues 142–161 (HEEIADATASIRESVSKVLA).

Homodimer.

Its function is as follows. Activates transcription. Positively regulates PcrtB promoter upstream of the crtB operon in a cAMP-independent manner. Regulated genes include genes encoding DNA photolyase, phytoene synthase and cytochrome P450 monooxygenase, which are involved in carotenoid biosynthesis. Positively regulates the light-inducible gene cluster in the megaplasmid in a cAMP-independent manner. The chain is Transcriptional regulator LdrP from Thermus thermophilus (strain ATCC 27634 / DSM 579 / HB8).